The chain runs to 780 residues: Tricorn protease-interacting factor F3 (780 aa).

Substrate contacts are provided by residues Glu-101 and 230 to 234; that span reads GAMEN. His-265 contributes to the Zn(2+) binding site. The active-site Proton acceptor is the Glu-266. Residues His-269 and Glu-288 each contribute to the Zn(2+) site.

This sequence belongs to the peptidase M1 family. In terms of assembly, part of the tricorn proteolytic complex. It depends on Zn(2+) as a cofactor.

The protein localises to the cytoplasm. In terms of biological role, proteases F1, F2 and F3 degrade oligopeptides produced by Tricorn (themselves probably produced by the proteasome), yielding free amino acids. The polypeptide is Tricorn protease-interacting factor F3 (trf3) (Thermoplasma acidophilum (strain ATCC 25905 / DSM 1728 / JCM 9062 / NBRC 15155 / AMRC-C165)).